The chain runs to 1818 residues: Unconventional myosin-Vb (1818 aa).

The Myosin N-terminal SH3-like domain maps to 8–60 (TRYTRVWIPDPDEVWRSAELTKDYKEGDKSLQLRLEDDTILEYPVDVQNNQVP). Positions 21–40 (VWRSAELTKDYKEGDKSLQL) are requires for interaction with LIMA1. One can recognise a Myosin motor domain in the interval 69–762 (VGENDLTALS…QVAYLEKLRA (694 aa)). 163–170 (GESGAGKT) lines the ATP pocket. The interval 641 to 663 (LNLLMETLNATTPHYVRCIKPND) is actin-binding. IQ domains lie at 765–794 (FREATIMIQKSVRGWLQRVKYRRLRAATLS), 788–817 (LRAATLSLQRFCRGYLARRLAEHLRRTRAA), 813–842 (RTRAAIVFQKQYRMLKARRAYRRVCRATVI), 836–865 (VCRATVIIQSFTRAMFVRRNYRQVLMEHKA), 861–890 (MEHKATIIQKYARGWMARKRFLRERDAAIV), and 884–913 (ERDAAIVIQCAFRRLKARQELKALKIEARS). Disordered stretches follow at residues 1086 to 1120 (LRDEQTPGHRKNPSNQSSLESDSNYPSISTSEIGD) and 1161 to 1188 (QAQLEKGQQDSKKGQVEQQNNGLDVDQD). Positions 1098 to 1118 (PSNQSSLESDSNYPSISTSEI) are enriched in polar residues. Coiled-coil stretches lie at residues 1140-1261 (MTVF…LILR) and 1313-1415 (LEAQ…ALAQ). Residue Ser1416 is modified to Phosphoserine. One can recognise a Dilute domain in the interval 1496–1773 (SSTINGIKKV…IRTIQAQLQE (278 aa)).

This sequence belongs to the TRAFAC class myosin-kinesin ATPase superfamily. Myosin family. Component of the CART complex, at least composed of ACTN4, HGS/HRS, MYO5B and TRIM3. Interacts with RAB11FIP2. Interacts with RAB11A and RAB8A. Found in a complex with CFTR and RAB11A. Interacts with NPC1L1. Interacts with LIMA1.

It is found in the cytoplasm. May be involved in vesicular trafficking via its association with the CART complex. The CART complex is necessary for efficient transferrin receptor recycling but not for EGFR degradation. Required in a complex with RAB11A and RAB11FIP2 for the transport of NPC1L1 to the plasma membrane. Together with RAB11A participates in CFTR trafficking to the plasma membrane and TF (transferrin) recycling in nonpolarized cells. Together with RAB11A and RAB8A participates in epithelial cell polarization. Together with RAB25 regulates transcytosis. Required for proper localization of bile salt export pump ABCB11 at the apical/canalicular plasma membrane of hepatocytes. The sequence is that of Unconventional myosin-Vb (Myo5b) from Mus musculus (Mouse).